We begin with the raw amino-acid sequence, 453 residues long: Ribosomal protein uS12 methylthiotransferase RimO (453 aa).

The MTTase N-terminal domain occupies 5-120; the sequence is PKVGFVSLGC…VMQAVHSHLP (116 aa). [4Fe-4S] cluster is bound by residues C14, C50, C79, C151, C155, and C158. The 246-residue stretch at 137 to 382 folds into the Radical SAM core domain; sequence LTPRHYAYLK…MEVAEEVSAR (246 aa). Residues 385–453 enclose the TRAM domain; that stretch reads QRKVGKTLKV…ADGHDLWGEV (69 aa).

It belongs to the methylthiotransferase family. RimO subfamily. [4Fe-4S] cluster is required as a cofactor.

It localises to the cytoplasm. The catalysed reaction is L-aspartate(89)-[ribosomal protein uS12]-hydrogen + (sulfur carrier)-SH + AH2 + 2 S-adenosyl-L-methionine = 3-methylsulfanyl-L-aspartate(89)-[ribosomal protein uS12]-hydrogen + (sulfur carrier)-H + 5'-deoxyadenosine + L-methionine + A + S-adenosyl-L-homocysteine + 2 H(+). Functionally, catalyzes the methylthiolation of an aspartic acid residue of ribosomal protein uS12. The polypeptide is Ribosomal protein uS12 methylthiotransferase RimO (Burkholderia vietnamiensis (strain G4 / LMG 22486) (Burkholderia cepacia (strain R1808))).